An 82-amino-acid polypeptide reads, in one-letter code: Cytochrome b559 subunit alpha (82 aa).

The chain crosses the membrane as a helical span at residues 21 to 35 (VIHSITIPALFIAGW). Residue His-23 coordinates heme.

The protein belongs to the PsbE/PsbF family. In terms of assembly, heterodimer of an alpha subunit and a beta subunit. PSII is composed of 1 copy each of membrane proteins PsbA, PsbB, PsbC, PsbD, PsbE, PsbF, PsbH, PsbI, PsbJ, PsbK, PsbL, PsbM, PsbT, PsbX, PsbY, PsbZ, Psb30/Ycf12, peripheral proteins PsbO, CyanoQ (PsbQ), PsbU, PsbV and a large number of cofactors. It forms dimeric complexes. Requires heme b as cofactor.

It localises to the cellular thylakoid membrane. Its function is as follows. This b-type cytochrome is tightly associated with the reaction center of photosystem II (PSII). PSII is a light-driven water:plastoquinone oxidoreductase that uses light energy to abstract electrons from H(2)O, generating O(2) and a proton gradient subsequently used for ATP formation. It consists of a core antenna complex that captures photons, and an electron transfer chain that converts photonic excitation into a charge separation. In Nostoc punctiforme (strain ATCC 29133 / PCC 73102), this protein is Cytochrome b559 subunit alpha.